We begin with the raw amino-acid sequence, 113 residues long: MEARAVAKYVRVSPRKARQVIDLIRGKEIGEALGILKHTPKKASSIIEKVLNSAIANAENNHDMMVEDLYVSKAYVDEGPTMKRYRARAMGQAGLIRKRTSHITIVVSEKKEG.

It belongs to the universal ribosomal protein uL22 family. As to quaternary structure, part of the 50S ribosomal subunit.

In terms of biological role, this protein binds specifically to 23S rRNA; its binding is stimulated by other ribosomal proteins, e.g. L4, L17, and L20. It is important during the early stages of 50S assembly. It makes multiple contacts with different domains of the 23S rRNA in the assembled 50S subunit and ribosome. Its function is as follows. The globular domain of the protein is located near the polypeptide exit tunnel on the outside of the subunit, while an extended beta-hairpin is found that lines the wall of the exit tunnel in the center of the 70S ribosome. This chain is Large ribosomal subunit protein uL22, found in Halothermothrix orenii (strain H 168 / OCM 544 / DSM 9562).